A 591-amino-acid chain; its full sequence is MTRDLEKLVAQTILQGFDAQYGRFLEVTAGAQQRFEQADWPAVQQAMKQRIHLYDHHVGLVVEQLRCITGIRCDDADFLARVKHIYTRLLPDYPRFEIAESFFNSVYCRLFNHRELTPDKLFVFSSQPEQRFREIPRPIAKTFVPTDGWQNMLEKLLSDVPLRLPWEDLPRDIGYIVAYLQRTFSAEQLAQATLQMANELFYRNKAAWLVGKLSLPDGIFPFLLPIHHNERGALFIDTCLTSQADASIVFGFARSYFMVYAPLPSALVAWLRDILPGKTTAELYLAIGCQKHSKTEYYREYLHYIAESEEQFIIAPGVKGMVMLVFTLPSFDRVFKVIKDRFAPQKEVSAERVMACYQLVKEHDRVGRMADTQEYENFVIDKHRISSELLDELWREVPDKLEDLGDRLVIRHLYMERRMTPLNLYLEQANAQQLHDVIEEYGNAIKQLAAANIFPGDMLFKNFGVTRHGRVVFYDYDEICYMTEVNFRKIPPPRHPEDELAAEPWYSVAPNDVFPEEFPHFLCSDRHIRTLFEEMHGDLFCADYWRALQQRIREGHIEDVYAYRRRKRFSQRADPRYTTAENDSGFCRNPA.

ATP-binding positions include 315-321 (APGVKGM) and lysine 336. Residue aspartate 371 is part of the active site.

This sequence belongs to the AceK family.

It is found in the cytoplasm. The enzyme catalyses L-seryl-[isocitrate dehydrogenase] + ATP = O-phospho-L-seryl-[isocitrate dehydrogenase] + ADP + H(+). Functionally, bifunctional enzyme which can phosphorylate or dephosphorylate isocitrate dehydrogenase (IDH) on a specific serine residue. This is a regulatory mechanism which enables bacteria to bypass the Krebs cycle via the glyoxylate shunt in response to the source of carbon. When bacteria are grown on glucose, IDH is fully active and unphosphorylated, but when grown on acetate or ethanol, the activity of IDH declines drastically concomitant with its phosphorylation. In Pectobacterium carotovorum subsp. carotovorum (strain PC1), this protein is Isocitrate dehydrogenase kinase/phosphatase.